A 245-amino-acid polypeptide reads, in one-letter code: MKMKQISDTTLKITISLEDLMDRGMEIADFLVPQEKTEEFFYAILDELEMPDSFLDTGMLSFRVTPKPDKVDVFVTKSKIDQNLDFEDLSDLPDMEELAQMSPDEFIKTLEKSIADKTKDDIEAIQSLEQVEVKEEEQEQAEQEAESKKEPYIYYILSFAKLADLVAFAKTVTFEMETSELYKMNERYYLTILVDIENHPSPYPAWLLARMREFADDSDISRSVLQEYGQVLMSHDAVLNLQKIG.

It belongs to the MecA family. As to quaternary structure, homodimer.

Functionally, enables the recognition and targeting of unfolded and aggregated proteins to the ClpC protease or to other proteins involved in proteolysis. The sequence is that of Adapter protein MecA from Streptococcus pneumoniae serotype 4 (strain ATCC BAA-334 / TIGR4).